A 322-amino-acid polypeptide reads, in one-letter code: Probable manganese-dependent inorganic pyrophosphatase (322 aa).

Residues His10, Asp14, Asp16, Asp86, His108, and Asp160 each coordinate Mn(2+).

It belongs to the PPase class C family. It depends on Mn(2+) as a cofactor.

Its subcellular location is the cytoplasm. It catalyses the reaction diphosphate + H2O = 2 phosphate + H(+). The protein is Probable manganese-dependent inorganic pyrophosphatase (ppaC) of Archaeoglobus fulgidus (strain ATCC 49558 / DSM 4304 / JCM 9628 / NBRC 100126 / VC-16).